A 237-amino-acid chain; its full sequence is Bax inhibitor 1 (237 aa).

The Cytoplasmic segment spans residues 1-29; sequence MNIFDRKINFDALLKFSHITPSTQQHLKK. Residue lysine 7 forms a Glycyl lysine isopeptide (Lys-Gly) (interchain with G-Cter in ubiquitin) linkage. Residues 30-50 form a helical membrane-spanning segment; that stretch reads VYASFALCMFVAAAGAYVHVV. The Lumenal portion of the chain corresponds to 51–52; sequence TH. A helical membrane pass occupies residues 53–73; that stretch reads FIQAGLLSALGSLALMIWLMA. Topologically, residues 74 to 86 are cytoplasmic; the sequence is TPHSHETEQKRLG. Residues 87 to 107 traverse the membrane as a helical segment; sequence LLAGFAFLTGVGLGPALELCI. The Lumenal segment spans residues 108–112; it reads AVNPS. The helical transmembrane segment at 113-133 threads the bilayer; it reads ILPTAFMGTAMIFTCFSLSAL. Residues 134–139 are Cytoplasmic-facing; sequence YARRRS. A helical transmembrane segment spans residues 140-160; that stretch reads YLFLGGILMSAMSLMLLSSLG. Residues 161–166 are Lumenal-facing; that stretch reads NLFFGS. The chain crosses the membrane as a helical span at residues 167 to 187; it reads IWLFQANLYLGLLVMCGFVLF. The Cytoplasmic portion of the chain corresponds to 188–206; the sequence is DTQLIIEKAEHGDKDYIWH. Residues 207–227 constitute an intramembrane region (helical); sequence CVDLFLDFVTLFRKLMLILAF. Topologically, residues 228-237 are cytoplasmic; it reads NEKDKKKEKK.

It belongs to the BI1 family. Interacts with BCL2. Interacts with BCL2L1. Interacts with ERN1. Ubiquitinated by BFAR, leading to proteasomal degradation. Highly abundant in adult testis.

It is found in the endoplasmic reticulum membrane. Functionally, endoplasmic reticulum (ER)-resident protein that confers cellular protection as an anti-apoptotic protein by limiting multiple stress-inducing pathways surrounding the endoplasmic reticulum and mitochondria. Inhibits the activities of the key sensor for the endoplasmic reticulum unfolded protein response IRE1alpha/ERN1 both directly and by blocking BAX/BAK binding. Modulates ER calcium homeostasis by acting as a calcium-leak channel. Negatively regulates autophagy and autophagosome formation, especially during periods of nutrient deprivation, and reduces cell survival during starvation. The chain is Bax inhibitor 1 (Tmbim6) from Mus musculus (Mouse).